Reading from the N-terminus, the 208-residue chain is MANNTRARRQARLSRSLGIALTPKAAKYMERRPYGPGEHGRARKKQDSDYAVRLREKQRLRAQYGIREAQMTRAFEEARRTKGLTGENLIELLEMRLDALVLRAGFARTIAQARQLVVHRHILVDGIRVDRPSFRVGEGQLVHVHSRSETMVPLQVAAAGAHRDVLPAVPAYLDVKLEALQARLVRRPKRSEIPVTCEEQLVVEFYAR.

Residues M95–A161 enclose the S4 RNA-binding domain.

This sequence belongs to the universal ribosomal protein uS4 family. As to quaternary structure, part of the 30S ribosomal subunit. Contacts protein S5. The interaction surface between S4 and S5 is involved in control of translational fidelity.

Functionally, one of the primary rRNA binding proteins, it binds directly to 16S rRNA where it nucleates assembly of the body of the 30S subunit. With S5 and S12 plays an important role in translational accuracy. The sequence is that of Small ribosomal subunit protein uS4 from Pseudarthrobacter chlorophenolicus (strain ATCC 700700 / DSM 12829 / CIP 107037 / JCM 12360 / KCTC 9906 / NCIMB 13794 / A6) (Arthrobacter chlorophenolicus).